Reading from the N-terminus, the 276-residue chain is Undecaprenyl-diphosphatase (276 aa).

A run of 5 helical transmembrane segments spans residues 84 to 104, 115 to 135, 188 to 208, 222 to 242, and 250 to 270; these read YRLG…GLFF, LWVV…AEYV, FGFL…LPDA, QLLV…AWLL, and MYWF…LLAT.

It belongs to the UppP family.

It is found in the cell membrane. The catalysed reaction is di-trans,octa-cis-undecaprenyl diphosphate + H2O = di-trans,octa-cis-undecaprenyl phosphate + phosphate + H(+). Catalyzes the dephosphorylation of undecaprenyl diphosphate (UPP). Confers resistance to bacitracin. The protein is Undecaprenyl-diphosphatase of Mycobacterium tuberculosis (strain ATCC 25177 / H37Ra).